Consider the following 26-residue polypeptide: Delta-conotoxin Am2766 (26 aa).

3 cysteine pairs are disulfide-bonded: C1-C16, C8-C20, and C15-C24. Glutamic acid 1-amide is present on E26.

As to expression, expressed by the venom duct.

Its subcellular location is the secreted. Functionally, delta-conotoxins bind to site 6 of voltage-gated sodium channels (Nav) and inhibit the inactivation process. The polypeptide is Delta-conotoxin Am2766 (Conus amadis (Amadis cone)).